Here is a 67-residue protein sequence, read N- to C-terminus: U-myrmeciitoxin(01)-Mg4a (67 aa).

The N-terminal stretch at 1–25 (MGKVFFFVLMIAIIGSTFLIEEALG) is a signal peptide.

It belongs to the ant myrmeciitoxin-01 family. Homodimer; disulfide-linked. Post-translationally, contains 2 intrachain disulfide bonds (one per chain) and 1 interchain disulfide bond. In terms of tissue distribution, expressed by the venom gland.

The protein resides in the secreted. The sequence is that of U-myrmeciitoxin(01)-Mg4a from Myrmecia gulosa (Red bulldog ant).